The following is a 280-amino-acid chain: 3-methyl-2-oxobutanoate hydroxymethyltransferase (280 aa).

2 residues coordinate Mg(2+): aspartate 60 and aspartate 99. Residues 60–61, aspartate 99, and lysine 129 contribute to the 3-methyl-2-oxobutanoate site; that span reads DS. Position 131 (glutamate 131) interacts with Mg(2+). Glutamate 198 functions as the Proton acceptor in the catalytic mechanism.

The protein belongs to the PanB family. As to quaternary structure, homodecamer; pentamer of dimers. Mg(2+) is required as a cofactor.

The protein resides in the cytoplasm. The enzyme catalyses 3-methyl-2-oxobutanoate + (6R)-5,10-methylene-5,6,7,8-tetrahydrofolate + H2O = 2-dehydropantoate + (6S)-5,6,7,8-tetrahydrofolate. The protein operates within cofactor biosynthesis; (R)-pantothenate biosynthesis; (R)-pantoate from 3-methyl-2-oxobutanoate: step 1/2. Catalyzes the reversible reaction in which hydroxymethyl group from 5,10-methylenetetrahydrofolate is transferred onto alpha-ketoisovalerate to form ketopantoate. This is 3-methyl-2-oxobutanoate hydroxymethyltransferase from Thermobifida fusca (strain YX).